Here is a 1019-residue protein sequence, read N- to C-terminus: MGTRDDVPEAKVLVPVAVYCGSIPRTSAGPRVLPPGSINSSLPHGEGSLQPEPRALLNNEEPSQLLRGLGQLGGLKLDTPSKGWQARNGHPRNLRALSLGDQPLVLLPSPESEANSVARDTIQIKDKLKKRRLSEGLAASSRASLDPGGGPQGVPLHSTIPRATSQRLLRVPRPMPLIQSIPTTPEASGVKEKGLDLPGSIPGPHELRPGAQEAQISWQYLHCNDEKMQKSLGAIVIPPIPKARTVAATPSRVPGSLPSPLPPGQGVLTGLRAPRTRLARGSGPREKTPASLEPKPLASPIRDRPAAAKKPALPFSQSAPTLTAFSFDCAREACPPLKEEDQKEIGTKIQVTISKSAREKMQLKQMKEMELLRRLEEPRTGQELTSQCLGSQRAFMKEGLLPLRGSGTLSVPTRLSGPCRNDVSIILRKWASRASLPSIPISRQEPRFARHASANSLPAVLTLGSPEWEEEEEMDLRACKELRPFSNPELGLRDALQCLNSSDWQMKEKGLVSIQRLAACHSEVLTGKLHDVCLVVTGEVTNLRSKVSHLAISTLGDLFQALKKNMDQEAEEIARCLLQKMADTNEFIQRAAGQSLRAMVENVTLARSLVVLTSAGVYHRNPLIRKYAAEHLSAVLEQIGAEKLLSGTRDSTDMLVHNLVRLAQDSNQDTRFYGRKMVNILMANTKFDAFLKQSLPSYDLQKVMAAIKQQGIEDNDELPSAKGRKVLRSLVVCENGLPIKEGLSCNGPRLVGLRSTLQGRGEMVEQLRELTRLLEAKDFRSRMEGVGQLLELCKAKTELVTAHLVQVFDAFTPRLQDSNKKVNQWALESFAKMIPLLRESLHPMLLSIIITVADNLNSKNSGIYAAAVAVLDAMVESLDNLCLLPALAGRVRFLSGRAVLDVTDRLAVLVASVYPRKPQAVERHVLPILWHFLNTATRNGTLPGPSGNIRGVVCRLSRSLQEHMGSRLLDFAASQPKHVLKTLQELLDSESLGGSRKATDRGVAPDSKTTGSSYPFQLD.

Disordered regions lie at residues 28-54 (AGPR…PEPR), 131-158 (RRLS…PLHS), 249-311 (TPSR…AKKP), and 991-1019 (SLGG…FQLD). Residues 1007-1019 (SKTTGSSYPFQLD) show a composition bias toward polar residues.

Belongs to the Crescerin family.

This chain is TOG array regulator of axonemal microtubules protein 2, found in Homo sapiens (Human).